A 356-amino-acid polypeptide reads, in one-letter code: sn-glycerol-3-phosphate import ATP-binding protein UgpC (356 aa).

Residues 4-235 (LKLQAVTKSW…PASLFVASFI (232 aa)) form the ABC transporter domain. 37 to 44 (GPSGCGKS) lines the ATP pocket.

This sequence belongs to the ABC transporter superfamily. sn-glycerol-3-phosphate importer (TC 3.A.1.1.3) family. The complex is composed of two ATP-binding proteins (UgpC), two transmembrane proteins (UgpA and UgpE) and a solute-binding protein (UgpB).

Its subcellular location is the cell inner membrane. It catalyses the reaction sn-glycerol 3-phosphate(out) + ATP + H2O = sn-glycerol 3-phosphate(in) + ADP + phosphate + H(+). Functionally, part of the ABC transporter complex UgpBAEC involved in sn-glycerol-3-phosphate (G3P) import. Responsible for energy coupling to the transport system. The sequence is that of sn-glycerol-3-phosphate import ATP-binding protein UgpC from Escherichia coli O157:H7.